A 431-amino-acid chain; its full sequence is Adenylosuccinate synthetase (431 aa).

GTP contacts are provided by residues 13–19 and 41–43; these read GDEGKGK and GHT. Asp-14 (proton acceptor) is an active-site residue. Asp-14 and Gly-41 together coordinate Mg(2+). Residues 14 to 17, 39 to 42, Thr-130, Arg-144, Gln-225, Thr-240, and Arg-304 contribute to the IMP site; these read DEGK and NAGH. His-42 (proton donor) is an active-site residue. 300-306 serves as a coordination point for substrate; that stretch reads ATTGRKR. Residues Arg-306, 332–334, and 415–417 each bind GTP; these read KLD and STG.

This sequence belongs to the adenylosuccinate synthetase family. In terms of assembly, homodimer. Requires Mg(2+) as cofactor.

The protein resides in the cytoplasm. The enzyme catalyses IMP + L-aspartate + GTP = N(6)-(1,2-dicarboxyethyl)-AMP + GDP + phosphate + 2 H(+). Its pathway is purine metabolism; AMP biosynthesis via de novo pathway; AMP from IMP: step 1/2. Its function is as follows. Plays an important role in the de novo pathway of purine nucleotide biosynthesis. Catalyzes the first committed step in the biosynthesis of AMP from IMP. This Shewanella woodyi (strain ATCC 51908 / MS32) protein is Adenylosuccinate synthetase.